A 1075-amino-acid chain; its full sequence is Atos homolog protein A (1075 aa).

The segment at 24–32 is transactivation domain 1 (TAD1); sequence ALLITEGRT. 3 disordered regions span residues 430 to 469, 570 to 592, and 703 to 766; these read FGSP…RQPA, YSPQ…PDSI, and LNKN…PHSV. The segment covering 440–454 has biased composition (basic and acidic residues); the sequence is DSREGKVREKSETRP. Positions 703 to 712 are enriched in polar residues; it reads LNKNKTNCSS. The span at 746–759 shows a compositional bias: basic and acidic residues; sequence DRLKTEQEAKRDSG. The tract at residues 878-935 is required for macropage invasion; the sequence is LLGNFEESVLNYRLDPLGIVDGFTAEVGASGTFCPTHLTLPVEVSFYSVSDDNAPSPY. Residues 962–970 form a transactivation domain 2 (TAD2) region; sequence FNPNKTVVK.

This sequence belongs to the ATOS family.

The protein localises to the nucleus. In terms of biological role, transcription regulator that syncronizes transcriptional and translational programs to promote macrophage invasion of tissues. This Mus musculus (Mouse) protein is Atos homolog protein A (Atosa).